Consider the following 231-residue polypeptide: F-box protein SKIP8 (231 aa).

The interval 1 to 24 is disordered; the sequence is MPSTPLANGGTPPMGGGERTTVTT. One can recognise an F-box domain in the interval 34–80; the sequence is VSMMEQLVPEITTHALSYLDYPSLCRLSMTNSLMRKAANDDNAWKAL.

In terms of assembly, part of a SCF (ASK-cullin-F-box) protein ligase complex. Interacts with SKP1A/ASK1.

Its pathway is protein modification; protein ubiquitination. Its function is as follows. Component of SCF(ASK-cullin-F-box) E3 ubiquitin ligase complexes, which may mediate the ubiquitination and subsequent proteasomal degradation of target proteins. This chain is F-box protein SKIP8 (SKIP8), found in Arabidopsis thaliana (Mouse-ear cress).